Consider the following 150-residue polypeptide: Myosin, essential light chain (150 aa).

2 EF-hand domains span residues 3–38 (ASADQIQECFSIFDKDNDGKVSVEDIGACLRSLGKS) and 75–110 (EQQKEMLDAFKALDKEGHGTIQGAELRQLLTTLGDY). Ca(2+) contacts are provided by D16, D18, D20, K22, and D27.

Myosin is a hexamer of 2 heavy chains and 4 light chains (two regulatory light chains and two essential light chains).

In Dictyostelium discoideum (Social amoeba), this protein is Myosin, essential light chain (mlcE).